A 147-amino-acid polypeptide reads, in one-letter code: Hemoglobin subunit epsilon (147 aa).

Residues 3 to 147 form the Globin domain; sequence HFTAEEKAAV…VAIALAHKYH (145 aa). Residues serine 14 and serine 51 each carry the phosphoserine modification. The heme b site is built by histidine 64 and histidine 93.

This sequence belongs to the globin family. In terms of assembly, heterotetramer of two alpha chains and two epsilon chains in early embryonic hemoglobin Gower-2; two zeta chains and two epsilon chains in early embryonic hemoglobin Gower-1. In terms of tissue distribution, red blood cells.

Functionally, the epsilon chain is a beta-type chain of early mammalian embryonic hemoglobin. This is Hemoglobin subunit epsilon (HBE1) from Pan troglodytes (Chimpanzee).